Here is an 860-residue protein sequence, read N- to C-terminus: Leucine--tRNA ligase (860 aa).

Positions 42–52 (PYPSGRLHMGH) match the 'HIGH' region motif. The 'KMSKS' region motif lies at 619–623 (KMSKS). Lys-622 contributes to the ATP binding site.

This sequence belongs to the class-I aminoacyl-tRNA synthetase family.

The protein resides in the cytoplasm. The enzyme catalyses tRNA(Leu) + L-leucine + ATP = L-leucyl-tRNA(Leu) + AMP + diphosphate. This is Leucine--tRNA ligase from Shigella boydii serotype 18 (strain CDC 3083-94 / BS512).